A 343-amino-acid chain; its full sequence is MEISKQTSDLLLSLEKKKGTLPKFSVLRSIPRNRIIYGAPGTGKSNYLEREVGKIFGDNPYVFTRVTFFPGYTYGQFIGAYKPVPIYKKLSGEEEIFSSNFRDKMENFEPMIDYQFVPGPFIDVLIKALKNRYTNFILIIEEINRANAASVFGDIFQLLDRNKNGESDYPVTFGPDIMNYLARNGIKDEMIKLPSNFFIWATMNNADQGVLPLDTAFKRRWSFEYLELEKYRKAVDSWKLSLRYKGHNKVIMWNDFRDIINKRLKGKVPEDKLLGPFFLKESELWNQNVFKNKLLYYLKEDVFKHNPTIDFLNASTFSELIEKYDGSDNIFTFDIDDSSFVSD.

As to quaternary structure, bsuMI restriction activity requires YdiR, YdiS and YdjA.

The enzyme catalyses Endonucleolytic cleavage of DNA to give specific double-stranded fragments with terminal 5'-phosphates.. In terms of biological role, a P subtype restriction enzyme that recognizes the double-stranded sequence 5'-CTCGAG-3'; the cleavage site is unknown. The polypeptide is Type II restriction enzyme BsuMI component YdiS (ydiS) (Bacillus subtilis (strain 168)).